Here is a 145-residue protein sequence, read N- to C-terminus: D-aminoacyl-tRNA deacylase (145 aa).

The Gly-cisPro motif, important for rejection of L-amino acids signature appears at 137–138 (GP).

The protein belongs to the DTD family. Homodimer.

It localises to the cytoplasm. It catalyses the reaction glycyl-tRNA(Ala) + H2O = tRNA(Ala) + glycine + H(+). The enzyme catalyses a D-aminoacyl-tRNA + H2O = a tRNA + a D-alpha-amino acid + H(+). An aminoacyl-tRNA editing enzyme that deacylates mischarged D-aminoacyl-tRNAs. Also deacylates mischarged glycyl-tRNA(Ala), protecting cells against glycine mischarging by AlaRS. Acts via tRNA-based rather than protein-based catalysis; rejects L-amino acids rather than detecting D-amino acids in the active site. By recycling D-aminoacyl-tRNA to D-amino acids and free tRNA molecules, this enzyme counteracts the toxicity associated with the formation of D-aminoacyl-tRNA entities in vivo and helps enforce protein L-homochirality. This is D-aminoacyl-tRNA deacylase from Shewanella baltica (strain OS195).